Here is a 145-residue protein sequence, read N- to C-terminus: Galectin-5 (145 aa).

Serine 2 bears the N-acetylserine mark. One can recognise a Galectin domain in the interval 17-145 (FFTSIPNGLY…GDIQLTHVET (129 aa)). Position 77–83 (77–83 (WGPEERS)) interacts with a beta-D-galactoside.

In terms of assembly, monomer. In terms of tissue distribution, erythrocytes.

May function in erythrocyte differentiation. This Rattus norvegicus (Rat) protein is Galectin-5 (Lgals5).